We begin with the raw amino-acid sequence, 165 residues long: Cystatin-like protein (165 aa).

An N-terminal signal peptide occupies residues 1-19; that stretch reads MDVALKLLLLAALTLLASA. Cystine bridges form between C80–C92 and C104–C118.

Functionally, involved in hypoxia tolerance. The sequence is that of Cystatin-like protein from Clarias batrachus (Walking catfish).